The chain runs to 351 residues: GDSL esterase/lipase At3g53100 (351 aa).

A signal peptide spans 1–24; it reads MQKMRVSGFRVLLLVSCFFCKSKG. The active-site Nucleophile is the serine 36. 3 N-linked (GlcNAc...) asparagine glycosylation sites follow: asparagine 234, asparagine 254, and asparagine 318. Catalysis depends on residues aspartate 326 and histidine 329.

Belongs to the 'GDSL' lipolytic enzyme family.

It is found in the secreted. The polypeptide is GDSL esterase/lipase At3g53100 (Arabidopsis thaliana (Mouse-ear cress)).